The following is a 443-amino-acid chain: BBSome complex member BBS5 homolog (443 aa).

Belongs to the BBS5 family.

It is found in the cytoplasm. It localises to the cytoskeleton. Its subcellular location is the flagellum axoneme. The polypeptide is BBSome complex member BBS5 homolog (Giardia intestinalis (strain ATCC 50803 / WB clone C6) (Giardia lamblia)).